The primary structure comprises 430 residues: Tol-Pal system protein TolB (430 aa).

An N-terminal signal peptide occupies residues 1 to 21 (MKQALRVAFGFLILWASVLHA).

Belongs to the TolB family. In terms of assembly, the Tol-Pal system is composed of five core proteins: the inner membrane proteins TolA, TolQ and TolR, the periplasmic protein TolB and the outer membrane protein Pal. They form a network linking the inner and outer membranes and the peptidoglycan layer.

The protein localises to the periplasm. Functionally, part of the Tol-Pal system, which plays a role in outer membrane invagination during cell division and is important for maintaining outer membrane integrity. TolB occupies a key intermediary position in the Tol-Pal system because it communicates directly with both membrane-embedded components, Pal in the outer membrane and TolA in the inner membrane. This Shigella boydii serotype 18 (strain CDC 3083-94 / BS512) protein is Tol-Pal system protein TolB.